The primary structure comprises 92 residues: Isoleucine--tRNA ligase (92 aa).

The Zn(2+) site is built by C55, C58, C75, and C78.

Belongs to the class-I aminoacyl-tRNA synthetase family. IleS type 1 subfamily. In terms of assembly, monomer. It depends on Zn(2+) as a cofactor.

The protein resides in the cytoplasm. It carries out the reaction tRNA(Ile) + L-isoleucine + ATP = L-isoleucyl-tRNA(Ile) + AMP + diphosphate. In terms of biological role, catalyzes the attachment of isoleucine to tRNA(Ile). As IleRS can inadvertently accommodate and process structurally similar amino acids such as valine, to avoid such errors it has two additional distinct tRNA(Ile)-dependent editing activities. One activity is designated as 'pretransfer' editing and involves the hydrolysis of activated Val-AMP. The other activity is designated 'posttransfer' editing and involves deacylation of mischarged Val-tRNA(Ile). This Klebsiella aerogenes (Enterobacter aerogenes) protein is Isoleucine--tRNA ligase (ileS).